The chain runs to 637 residues: Chaperone protein dnaK2 (637 aa).

T197 is modified (phosphothreonine; by autocatalysis). Positions A602–K637 are disordered. Over residues A603–D623 the composition is skewed to gly residues. Residues A624–K637 are compositionally biased toward acidic residues.

This sequence belongs to the heat shock protein 70 family.

In terms of biological role, acts as a chaperone. This chain is Chaperone protein dnaK2 (dnaK2), found in Parasynechococcus marenigrum (strain WH8102).